Here is a 256-residue protein sequence, read N- to C-terminus: Thiazole synthase (256 aa).

The active-site Schiff-base intermediate with DXP is lysine 95. 1-deoxy-D-xylulose 5-phosphate contacts are provided by residues glycine 156, 182–183, and 204–205; these read AG and NT.

This sequence belongs to the ThiG family. Homotetramer. Forms heterodimers with either ThiH or ThiS.

The protein localises to the cytoplasm. The catalysed reaction is [ThiS sulfur-carrier protein]-C-terminal-Gly-aminoethanethioate + 2-iminoacetate + 1-deoxy-D-xylulose 5-phosphate = [ThiS sulfur-carrier protein]-C-terminal Gly-Gly + 2-[(2R,5Z)-2-carboxy-4-methylthiazol-5(2H)-ylidene]ethyl phosphate + 2 H2O + H(+). It functions in the pathway cofactor biosynthesis; thiamine diphosphate biosynthesis. Its function is as follows. Catalyzes the rearrangement of 1-deoxy-D-xylulose 5-phosphate (DXP) to produce the thiazole phosphate moiety of thiamine. Sulfur is provided by the thiocarboxylate moiety of the carrier protein ThiS. In vitro, sulfur can be provided by H(2)S. This Cronobacter sakazakii (strain ATCC BAA-894) (Enterobacter sakazakii) protein is Thiazole synthase.